We begin with the raw amino-acid sequence, 612 residues long: Cyclin-dependent kinase 8 (612 aa).

In terms of domain architecture, Protein kinase spans 23–345 (FENSKEIGRG…CEEAMNDIYF (323 aa)). Residues 29 to 37 (IGRGTYGLV) and K57 each bind ATP. D155 serves as the catalytic Proton acceptor. Low complexity-rich tracts occupy residues 403-455 (QQQM…MGQP), 472-483 (HQMMQQQHQSQH), 543-555 (PQPG…QQRP), 564-573 (QGYMNPQMGM), and 600-612 (NPQQ…QYHR). 2 disordered regions span residues 403 to 483 (QQQM…QSQH) and 543 to 612 (PQPG…QYHR).

Belongs to the protein kinase superfamily. CMGC Ser/Thr protein kinase family. CDC2/CDKX subfamily. As to quaternary structure, component of the Mediator complex. Requires Mg(2+) as cofactor.

Its subcellular location is the nucleus. It catalyses the reaction L-seryl-[protein] + ATP = O-phospho-L-seryl-[protein] + ADP + H(+). It carries out the reaction L-threonyl-[protein] + ATP = O-phospho-L-threonyl-[protein] + ADP + H(+). The enzyme catalyses [DNA-directed RNA polymerase] + ATP = phospho-[DNA-directed RNA polymerase] + ADP + H(+). In terms of biological role, component of the Mediator complex, a coactivator involved in regulated gene transcription of nearly all RNA polymerase II-dependent genes. Mediator functions as a bridge to convey information from gene-specific regulatory proteins to the basal RNA polymerase II transcription machinery. Mediator is recruited to promoters by direct interactions with regulatory proteins and serves as a scaffold for the assembly of a functional pre-initiation complex with RNA polymerase II and the general transcription factors. Phosphorylates the CTD (C-terminal domain) of the large subunit of RNA polymerase II (RNAp II), which may inhibit the formation of a transcription initiation complex. In Caenorhabditis briggsae, this protein is Cyclin-dependent kinase 8 (cdk-8).